An 81-amino-acid polypeptide reads, in one-letter code: Cytochrome c oxidase subunit 7A1, mitochondrial (81 aa).

The transit peptide at 1–21 directs the protein to the mitochondrion; sequence MRHLLGLPQLASRAFSTTVRQ. Residues 51-72 form a helical membrane-spanning segment; that stretch reads ILYRLTMTLTVVGTGYSLYWLL.

The protein belongs to the cytochrome c oxidase VIIa family. Component of the complex IV (CIV, cytochrome c oxidase). The complex exists as a monomer or a dimer and forms supercomplexes (SCs) in the inner mitochondrial membrane with NADH-ubiquinone oxidoreductase (complex I, CI) and ubiquinol-cytochrome c oxidoreductase (cytochrome b-c1 complex, complex III, CIII), resulting in different assemblies (supercomplex SCI(1)III(2)IV(1) and megacomplex MCI(2)III(2)IV(2)).

The protein resides in the mitochondrion inner membrane. It participates in energy metabolism; oxidative phosphorylation. Component of the mitochondrial respiratory complex IV (CIV, also named cytochrome c oxidase complex), the last enzyme in the mitochondrial electron transport chain which drives oxidative phosphorylation. The CIV complex is the component of the respiratory chain that catalyzes the reduction of oxygen to water. Acts as an assembly factor that specifically drives the homodimerization of CIV complexes, mediating the formation of mitochondrial respiratory supercomplexes (respirasomes) containing two CIV: supercomplxes with two molecules of CIV show improved activity. The chain is Cytochrome c oxidase subunit 7A1, mitochondrial from Danio rerio (Zebrafish).